A 206-amino-acid chain; its full sequence is Ribosomal RNA small subunit methyltransferase G (206 aa).

Residues glycine 71, phenylalanine 76, 125 to 126, and arginine 139 each bind S-adenosyl-L-methionine; that span reads IE.

It belongs to the methyltransferase superfamily. RNA methyltransferase RsmG family.

Its subcellular location is the cytoplasm. It catalyses the reaction guanosine(527) in 16S rRNA + S-adenosyl-L-methionine = N(7)-methylguanosine(527) in 16S rRNA + S-adenosyl-L-homocysteine. Its function is as follows. Specifically methylates the N7 position of guanine in position 527 of 16S rRNA. The chain is Ribosomal RNA small subunit methyltransferase G from Cereibacter sphaeroides (strain ATCC 17029 / ATH 2.4.9) (Rhodobacter sphaeroides).